The following is a 421-amino-acid chain: CaM kinase-like vesicle-associated protein (421 aa).

One can recognise a Protein kinase domain in the interval 24–284 (YDLGQVVKSE…AQEAIAHEWI (261 aa)). Residues 326–421 (ASEQGDTGAS…PQMLPQRKGY (96 aa)) are disordered. Composition is skewed to low complexity over residues 330–340 (GDTGASGLAAG) and 390–406 (QQQAQQQQQAQQQQQAR).

This sequence belongs to the protein kinase superfamily. CAMK Ser/Thr protein kinase family. In terms of assembly, interacts with calmodulin, in the presence of calcium. It depends on Ca(2+) as a cofactor. Ubiquitously expressed.

Its subcellular location is the cytoplasmic vesicle membrane. Its function is as follows. Does not appear to have detectable kinase activity. The sequence is that of CaM kinase-like vesicle-associated protein (camkv) from Takifugu rubripes (Japanese pufferfish).